Here is an 861-residue protein sequence, read N- to C-terminus: Importin subunit beta-1 (861 aa).

Ser2 is modified (N-acetylserine). HEAT repeat units lie at residues 3–35 (TAEFAQLLENSILSPDQNIRLTSETQLKKLSND), 37–66 (FLQFAGLSSQVLIDENTKLEGRILAALTLK), 90–129 (PEAKNQIKTNALTALVSIEPRIANAAAQLIAAIADIELPH), 134–164 (ELMKIMVDNTGAEQPENVKRASLLALGYMCE), 177–208 (SNNILIAIVQGAQSTETSKAVRLAALNALADS), 219–255 (EGERNYLMQVVCEATQAEDIEVQAAAFGCLCKIMSLY), 260–306 (KPYM…ELAQ), 317–362 (FALS…AQNC), 367–395 (LEPVLEFVEQNITADNWRNREAAVMAFGS), 402–442 (KVQR…ADSV), 452–484 (LPGVVQACLIGLQDHPKVATNCSWTIINLVEQL), 496–530 (YPALVDGLIGAANRIDNEFNARASAFSALTTMVEY), 536–586 (AETS…VIRK), 592–629 (EPVADMLMGLFFRLLEKKDSAFIEDDVFYAISALAASL), 634–669 (EKYLETFSPYLLKALNQVDSPVSITAVGFIADISNS), 675–713 (RRYSDAMMNVLAQMISNPNARRELKPAVLSVFGDIASNI), 718–764 (IPYL…IVAG), 773–812 (FPYVGTIFQFIAQVAEDPQLYSEDATSRAAVGLIGDIAAM), and 819–859 (KQFY…KRQL). In terms of domain architecture, Importin N-terminal spans 25–106 (SETQLKKLSN…KTNALTALVS (82 aa)). A Phosphoserine modification is found at Ser836.

The protein belongs to the importin beta family. Importin beta-1 subfamily. As to quaternary structure, forms a complex with the importin alpha subunit (SRP1/KAP60). Interacts with Ran (GSP1); interacts specifically with the GTP-bound form of Ran (GTP-Ran), protecting it from GTP hydrolysis and nucleotide exchange. Interacts with nucleoporin NUP1.

Its subcellular location is the cytoplasm. It is found in the nucleus. The protein localises to the nuclear pore complex. Its function is as follows. Importin beta subunit that functions in nuclear protein import through association with the importin alpha subunit, which binds to the classical nuclear localization signal (cNLS) in cargo substrates. Docking of the importin/substrate complex to the nuclear pore complex (NPC) is mediated by importin beta through binding to nucleoporin FxFG repeats and the complex is subsequently translocated through the pore by an energy requiring, Ran-dependent mechanism. At the nucleoplasmic side of the NPC, GTP-Ran binds to importin beta and the three components separate, leading to release of the cargo. Importin alpha and beta are re-exported from the nucleus to the cytoplasm where GTP hydrolysis releases Ran from importin beta. The directionality of nuclear import is thought to be conferred by an asymmetric distribution of the GTP- and GDP-bound forms of Ran between the cytoplasm and nucleus. Mediates the nuclear import of histones H2A and H2B. Mediates the nuclear import of transcription factor GCN4. The chain is Importin subunit beta-1 from Saccharomyces cerevisiae (strain ATCC 204508 / S288c) (Baker's yeast).